Here is a 555-residue protein sequence, read N- to C-terminus: Probable beta-glucosidase btgE (555 aa).

Positions 1-18 (MRGAILATAAAFAGTAVA) are cleaved as a signal peptide. 2 disordered regions span residues 92-114 (TSSA…VTLP) and 263-290 (TTSA…PTGA). A compositionally biased stretch (low complexity) spans 263–288 (TTSAASTTTAVPSSSTTTSSATSVPT). Catalysis depends on glutamate 392, which acts as the Proton donor. Glutamate 488 (nucleophile) is an active-site residue.

It belongs to the glycosyl hydrolase 17 family.

The protein localises to the secreted. It is found in the cell wall. It carries out the reaction Hydrolysis of terminal, non-reducing beta-D-glucosyl residues with release of beta-D-glucose.. It functions in the pathway glycan metabolism; cellulose degradation. Functionally, beta-glucosidases are one of a number of cellulolytic enzymes involved in the degradation of cellulosic biomass. Catalyzes the last step releasing glucose from the inhibitory cellobiose. The protein is Probable beta-glucosidase btgE (btgE) of Emericella nidulans (strain FGSC A4 / ATCC 38163 / CBS 112.46 / NRRL 194 / M139) (Aspergillus nidulans).